Here is a 953-residue protein sequence, read N- to C-terminus: UvrABC system protein A (953 aa).

An ATP-binding site is contributed by 33–40; it reads GLSGSGKS. 2 consecutive ABC transporter domains span residues 320–599 and 619–949; these read WGST…EESI and GHDN…RYLK. ATP is bound at residue 652-659; that stretch reads GVSGSGKS. The segment at 752–778 adopts a C4-type zinc-finger fold; sequence CEACQGDGLIKIEMHFLPDVYVKCDIC.

Belongs to the ABC transporter superfamily. UvrA family. As to quaternary structure, forms a heterotetramer with UvrB during the search for lesions.

Its subcellular location is the cytoplasm. Functionally, the UvrABC repair system catalyzes the recognition and processing of DNA lesions. UvrA is an ATPase and a DNA-binding protein. A damage recognition complex composed of 2 UvrA and 2 UvrB subunits scans DNA for abnormalities. When the presence of a lesion has been verified by UvrB, the UvrA molecules dissociate. This Rickettsia bellii (strain RML369-C) protein is UvrABC system protein A.